A 282-amino-acid polypeptide reads, in one-letter code: Alpha/beta-gliadin A-III (282 aa).

The signal sequence occupies residues Met1–Ala20. Over residues Gln27–Pro59 the composition is skewed to low complexity. 2 disordered regions span residues Gln27 to Gln122 and Ser220 to Pro240. Residues Pro60 to Gln111 are compositionally biased toward pro residues. A compositionally biased stretch (low complexity) spans Gln112–Gln122. The span at Ser224–Pro240 shows a compositional bias: polar residues.

The protein belongs to the gliadin/glutenin family. Substrate of transglutaminase.

Gliadin is the major seed storage protein in wheat. The chain is Alpha/beta-gliadin A-III from Triticum aestivum (Wheat).